The sequence spans 357 residues: Anthranilate phosphoribosyltransferase (357 aa).

Residues G91, 94–95 (GD), T99, 101–104 (NIST), 119–127 (KHGNRSVSS), and S131 contribute to the 5-phospho-alpha-D-ribose 1-diphosphate site. G91 is a binding site for anthranilate. Residue S103 coordinates Mg(2+). Position 122 (N122) interacts with anthranilate. R177 is a binding site for anthranilate. D235 and E236 together coordinate Mg(2+).

Belongs to the anthranilate phosphoribosyltransferase family. Homodimer. The cofactor is Mg(2+).

The enzyme catalyses N-(5-phospho-beta-D-ribosyl)anthranilate + diphosphate = 5-phospho-alpha-D-ribose 1-diphosphate + anthranilate. Its pathway is amino-acid biosynthesis; L-tryptophan biosynthesis; L-tryptophan from chorismate: step 2/5. In terms of biological role, catalyzes the transfer of the phosphoribosyl group of 5-phosphorylribose-1-pyrophosphate (PRPP) to anthranilate to yield N-(5'-phosphoribosyl)-anthranilate (PRA). This chain is Anthranilate phosphoribosyltransferase, found in Shewanella baltica (strain OS185).